Reading from the N-terminus, the 122-residue chain is Large ribosomal subunit protein uL14 (122 aa).

This sequence belongs to the universal ribosomal protein uL14 family. Part of the 50S ribosomal subunit. Forms a cluster with proteins L3 and L19. In the 70S ribosome, L14 and L19 interact and together make contacts with the 16S rRNA in bridges B5 and B8.

Its function is as follows. Binds to 23S rRNA. Forms part of two intersubunit bridges in the 70S ribosome. The polypeptide is Large ribosomal subunit protein uL14 (Hyphomonas neptunium (strain ATCC 15444)).